Here is a 200-residue protein sequence, read N- to C-terminus: MSRFLGSIFKKSRRYGISLLENNKEFTKGKKRTTAPGQHGARRVKPSDYQLHLYEKQKVRYMYGLNERQFKHLYSIASKKQGVTGVILLQMIESRLDNLVFRAGFARTRAQARQFVNHGHFTVDGHKANIPSMVIKVGSVIEMKPSLQTSPQVKDAVEAMTVSPWLTKTDFKVTFNRLPERKEFAKDINEALIVEYYNRR.

The S4 RNA-binding domain occupies 94 to 157 (SRLDNLVFRA…QTSPQVKDAV (64 aa)).

The protein belongs to the universal ribosomal protein uS4 family. In terms of assembly, part of the 30S ribosomal subunit. Contacts protein S5. The interaction surface between S4 and S5 is involved in control of translational fidelity.

Its function is as follows. One of the primary rRNA binding proteins, it binds directly to 16S rRNA where it nucleates assembly of the body of the 30S subunit. With S5 and S12 plays an important role in translational accuracy. The protein is Small ribosomal subunit protein uS4 of Metamycoplasma arthritidis (strain 158L3-1) (Mycoplasma arthritidis).